A 391-amino-acid chain; its full sequence is 12-oxophytodienoate reductase 3 (391 aa).

N-acetylmethionine is present on Met1. Thr2 is modified (N-acetylthreonine; in 12-oxophytodienoate reductase 3, N-terminally processed). Residues 31–33 (PMT), Gly64, and Gln106 each bind FMN. A substrate-binding site is contributed by His186. Tyr191 acts as the Proton donor in catalysis. Arg238 contacts FMN. Arg284 lines the substrate pocket. FMN-binding positions include 320–322 (SGG) and 343–344 (GR). Positions 389 to 391 (SRL) match the Microbody targeting signal motif.

This sequence belongs to the NADH:flavin oxidoreductase/NADH oxidase family. It depends on FMN as a cofactor. Expressed in green seedling, leaves, flowers (anthers, pistil, petal and stamen), and to a lower extent in roots and siliques. Specifically expressed in filament during anther dehiscence initiation.

It localises to the peroxisome. It carries out the reaction (1S,2S)-OPC-8 + NADP(+) = (9S,13S,15Z)-12-oxophyto-10,15-dienoate + NADPH + H(+). Its pathway is lipid metabolism; oxylipin biosynthesis. In terms of biological role, specifically cleaves olefinic bonds in cyclic enones. Involved in the biosynthesis of jasmonic acid (JA) and perhaps in biosynthesis or metabolism of other oxylipin signaling moleclules. Required for the spatial and temporal regulation of JA levels during dehiscence of anthers, promoting the stomium degeneration program. In vitro, reduces 9S,13S-12-oxophytodienoic acid (9S,13S-OPDA) and 9R,13R-OPDA to 9S,13S-OPC-8:0 and 9R,13R-OPC-8:0, respectively. Can detoxify the explosive 2,4,6-trinitrotoluene (TNT) in vitro by catalyzing its nitroreduction to form hydroxylamino-dinitrotoluene (HADNT). The protein is 12-oxophytodienoate reductase 3 of Arabidopsis thaliana (Mouse-ear cress).